Reading from the N-terminus, the 149-residue chain is MARYFPVQKTTMIKPEEVERKWYVVDASGKVLGRLATRIAKILMGKHKPNYTPHVDTGDYVIVVNADKVVLTGKKLDQKVYYWHSGYPGGLKSLTARQMLEKHPERLIWLAVKRMLPKNRKGRKMLKRLKVYASPEHPHQAQKPEPIEL.

This sequence belongs to the universal ribosomal protein uL13 family. Part of the 50S ribosomal subunit.

Functionally, this protein is one of the early assembly proteins of the 50S ribosomal subunit, although it is not seen to bind rRNA by itself. It is important during the early stages of 50S assembly. This is Large ribosomal subunit protein uL13 from Thermotoga maritima (strain ATCC 43589 / DSM 3109 / JCM 10099 / NBRC 100826 / MSB8).